Here is a 200-residue protein sequence, read N- to C-terminus: MKIGIVAYQGSFEEHALQTKRALDNLKIQGDIVAVKKPNDLKDVDAIIIPGGESTTIGVVAQKLGILDELKEKINSGIPTLGTCAGAIILAKDVTDAKVGKKSQPLIGSMDISVIRNYYGRQRESFEATVDLSEIGGGKTRVVFIRAPAIVKTWGDAKPLSKLNDVIIMAMERNMVATTFHPELSSTTVIHEFLIKMAKK.

Residue 52 to 54 coordinates L-glutamine; it reads GES. Catalysis depends on Cys-84, which acts as the Nucleophile. Residues Arg-116 and 145–146 contribute to the L-glutamine site; that span reads IR. Residues His-181 and Glu-183 each act as charge relay system in the active site.

Belongs to the glutaminase PdxT/SNO family. As to quaternary structure, in the presence of PdxS, forms a dodecamer of heterodimers. Only shows activity in the heterodimer.

It catalyses the reaction aldehydo-D-ribose 5-phosphate + D-glyceraldehyde 3-phosphate + L-glutamine = pyridoxal 5'-phosphate + L-glutamate + phosphate + 3 H2O + H(+). The enzyme catalyses L-glutamine + H2O = L-glutamate + NH4(+). It participates in cofactor biosynthesis; pyridoxal 5'-phosphate biosynthesis. In terms of biological role, catalyzes the hydrolysis of glutamine to glutamate and ammonia as part of the biosynthesis of pyridoxal 5'-phosphate. The resulting ammonia molecule is channeled to the active site of PdxS. In Sulfurisphaera tokodaii (strain DSM 16993 / JCM 10545 / NBRC 100140 / 7) (Sulfolobus tokodaii), this protein is Pyridoxal 5'-phosphate synthase subunit PdxT.